A 510-amino-acid chain; its full sequence is MNFLHFLTTSLLLLGGSRLALADSASSAIKIKGNAFFNSDTNERFYVRGVDYQPGGSSTLVDPLADTSICKRDLPYLQGLNINTIRVYQVDNSANHDECMSALQDAGIYVILDLATSSNSISRLDAASSYNAVFLQGIFATIDAFKNYTNVLGFFAGNEVANTAENSATTTWVKAALRDAKEYISKNSDRDIPVGYSAADVAEIRVQCADFFACGNSSVRADFYGMNMYEWCGADSSFTISGYDQRMEEFANYSIPLFLSEYGCNDVTKESDGTPDRPFDEVDAIFSSEMSSVFSGGLVYQYSEEGNNYGLVVIDGDNVTISKNYETLKEKYASAANYTGDGDYSSSPATLTCPADDSYFTSFPLPTMPSEAKGFIESGAGQPLGFNAPSNQEFSANATALVSPGPHSVSTTINTNIVQATISQSSTSGSSSGSSSASTTASSSSVSSGSSISSGSSSMSTSYTSASGSSAHSSGSSSGSSSATSSASTFNLSRFYVFAGILAISGLVFA.

The first 22 residues, 1-22 (MNFLHFLTTSLLLLGGSRLALA), serve as a signal peptide directing secretion. A disulfide bridge links C70 with C99. (1,3-beta-D-glucosyl)n is bound at residue Y88. The N-linked (GlcNAc...) asparagine glycan is linked to N147. Residues N158, E159, D200, and R205 each contribute to the (1,3-beta-D-glucosyl)n site. The active-site Proton donor is E159. 2 disulfide bridges follow: C214-C353 and C232-C264. N-linked (GlcNAc...) asparagine glycosylation is found at N216 and N252. Residue E261 is the Nucleophile of the active site. (1,3-beta-D-glucosyl)n is bound at residue Y300. N-linked (GlcNAc...) asparagine glycosylation is found at N318, N337, and N397. A disordered region spans residues 424–456 (QSSTSGSSSGSSSASTTASSSSVSSGSSISSGS). A lipid anchor (GPI-anchor amidated serine) is attached at S485. The propeptide at 486-510 (SASTFNLSRFYVFAGILAISGLVFA) is removed in mature form. N491 carries an N-linked (GlcNAc...) asparagine glycan.

This sequence belongs to the glycosyl hydrolase 72 family. The GPI-anchor is attached to the protein in the endoplasmic reticulum and serves to target the protein to the cell surface. There, the glucosamine-inositol phospholipid moiety is cleaved off and the GPI-modified mannoprotein is covalently attached via its lipidless GPI glycan remnant to the 1,6-beta-glucan of the outer cell wall layer.

The protein resides in the secreted. Its subcellular location is the cell wall. The protein localises to the membrane. Its function is as follows. Splits internally a 1,3-beta-glucan molecule and transfers the newly generated reducing end (the donor) to the non-reducing end of another 1,3-beta-glucan molecule (the acceptor) forming a 1,3-beta linkage, resulting in the elongation of 1,3-beta-glucan chains in the cell wall. The protein is 1,3-beta-glucanosyltransferase gas5 (gas5) of Schizosaccharomyces pombe (strain 972 / ATCC 24843) (Fission yeast).